The following is an 84-amino-acid chain: Putative defensin-like protein 165 (84 aa).

The N-terminal stretch at 1–27 (MSTKLFSYFMLLVVLFSVLTIIPKTEA) is a signal peptide. Cystine bridges form between C31/C78, C41/C60, C46/C72, and C50/C74.

It belongs to the DEFL family.

The protein localises to the secreted. This is Putative defensin-like protein 165 (LCR12) from Arabidopsis thaliana (Mouse-ear cress).